Consider the following 390-residue polypeptide: 1-deoxy-D-xylulose 5-phosphate reductoisomerase (390 aa).

Positions 10, 11, 12, 13, 36, 37, 38, and 121 each coordinate NADPH. Lys122 contacts 1-deoxy-D-xylulose 5-phosphate. Glu123 lines the NADPH pocket. A Mn(2+)-binding site is contributed by Asp147. Residues Ser148, Glu149, Ser173, and His196 each contribute to the 1-deoxy-D-xylulose 5-phosphate site. A Mn(2+)-binding site is contributed by Glu149. An NADPH-binding site is contributed by Gly202. 1-deoxy-D-xylulose 5-phosphate contacts are provided by Ser209, Asn214, Lys215, and Glu218. Residue Glu218 coordinates Mn(2+). Positions 367–390 (AASEHGRREAEKRVGARAHAPAGR) are disordered. Basic and acidic residues predominate over residues 370–380 (EHGRREAEKRV).

It belongs to the DXR family. Mg(2+) is required as a cofactor. It depends on Mn(2+) as a cofactor.

It carries out the reaction 2-C-methyl-D-erythritol 4-phosphate + NADP(+) = 1-deoxy-D-xylulose 5-phosphate + NADPH + H(+). It functions in the pathway isoprenoid biosynthesis; isopentenyl diphosphate biosynthesis via DXP pathway; isopentenyl diphosphate from 1-deoxy-D-xylulose 5-phosphate: step 1/6. Catalyzes the NADPH-dependent rearrangement and reduction of 1-deoxy-D-xylulose-5-phosphate (DXP) to 2-C-methyl-D-erythritol 4-phosphate (MEP). The chain is 1-deoxy-D-xylulose 5-phosphate reductoisomerase from Anaeromyxobacter sp. (strain K).